Here is a 276-residue protein sequence, read N- to C-terminus: Large ribosomal subunit protein uL2 (276 aa).

Residues 225-276 (VMNPVDHPHGGGEGKTAAGRDPVSPWGTPTKGYRTRSNKRTDSMIVQKRHKR) are disordered.

It belongs to the universal ribosomal protein uL2 family. As to quaternary structure, part of the 50S ribosomal subunit. Forms a bridge to the 30S subunit in the 70S ribosome.

In terms of biological role, one of the primary rRNA binding proteins. Required for association of the 30S and 50S subunits to form the 70S ribosome, for tRNA binding and peptide bond formation. It has been suggested to have peptidyltransferase activity; this is somewhat controversial. Makes several contacts with the 16S rRNA in the 70S ribosome. The sequence is that of Large ribosomal subunit protein uL2 from Cupriavidus taiwanensis (strain DSM 17343 / BCRC 17206 / CCUG 44338 / CIP 107171 / LMG 19424 / R1) (Ralstonia taiwanensis (strain LMG 19424)).